The following is a 292-amino-acid chain: Ribosomal protein L11 methyltransferase (292 aa).

Residues Thr-138, Gly-159, Asp-181, and Asn-225 each coordinate S-adenosyl-L-methionine.

This sequence belongs to the methyltransferase superfamily. PrmA family.

Its subcellular location is the cytoplasm. It catalyses the reaction L-lysyl-[protein] + 3 S-adenosyl-L-methionine = N(6),N(6),N(6)-trimethyl-L-lysyl-[protein] + 3 S-adenosyl-L-homocysteine + 3 H(+). In terms of biological role, methylates ribosomal protein L11. In Leuconostoc citreum (strain KM20), this protein is Ribosomal protein L11 methyltransferase.